Reading from the N-terminus, the 70-residue chain is Conotoxin Cl9.1 (70 aa).

Positions 1–20 (MMGKLGVVLFICLVLFPLET) are cleaved as a signal peptide. The propeptide occupies 21-50 (LQLEGGQQADRHVDQLEGNPNRETRTIEVR). Cystine bridges form between cysteine 51-cysteine 63, cysteine 56-cysteine 67, and cysteine 61-cysteine 70.

It belongs to the conotoxin M superfamily. As to expression, expressed by the venom duct.

The protein localises to the secreted. In Californiconus californicus (California cone), this protein is Conotoxin Cl9.1.